Consider the following 89-residue polypeptide: Small ribosomal subunit protein uS15 (89 aa).

It belongs to the universal ribosomal protein uS15 family. As to quaternary structure, part of the 30S ribosomal subunit. Forms a bridge to the 50S subunit in the 70S ribosome, contacting the 23S rRNA.

One of the primary rRNA binding proteins, it binds directly to 16S rRNA where it helps nucleate assembly of the platform of the 30S subunit by binding and bridging several RNA helices of the 16S rRNA. Functionally, forms an intersubunit bridge (bridge B4) with the 23S rRNA of the 50S subunit in the ribosome. The sequence is that of Small ribosomal subunit protein uS15 from Bifidobacterium longum (strain DJO10A).